The chain runs to 309 residues: Porphobilinogen deaminase (309 aa).

At Cys-242 the chain carries S-(dipyrrolylmethanemethyl)cysteine.

Belongs to the HMBS family. In terms of assembly, monomer. It depends on dipyrromethane as a cofactor.

The catalysed reaction is 4 porphobilinogen + H2O = hydroxymethylbilane + 4 NH4(+). Its pathway is porphyrin-containing compound metabolism; protoporphyrin-IX biosynthesis; coproporphyrinogen-III from 5-aminolevulinate: step 2/4. Functionally, tetrapolymerization of the monopyrrole PBG into the hydroxymethylbilane pre-uroporphyrinogen in several discrete steps. The polypeptide is Porphobilinogen deaminase (Legionella pneumophila (strain Paris)).